The chain runs to 367 residues: Popeye domain-containing protein 2 (367 aa).

Residue N4 is glycosylated (N-linked (GlcNAc...) asparagine). 2 helical membrane-spanning segments follow: residues 36–56 (FLLMGFMAGSGVYGCFYLFGI) and 77–97 (IVLWNVLLTVACLLQLAQLVY). Disordered stretches follow at residues 273–292 (PSASDGEPESEKDDEEALEA) and 312–367 (APPA…TPEL). Residues 278-290 (GEPESEKDDEEAL) are compositionally biased toward acidic residues. Over residues 344–356 (PLQNSSQVMSRSQ) the composition is skewed to polar residues. A glycan (N-linked (GlcNAc...) asparagine) is linked at N347. Position 364 is a phosphothreonine (T364).

Belongs to the popeye family. In terms of tissue distribution, expressed in the developing and adult heart, with high expression levels in the sinus and atrioventricular nodes. Also expressed in the bladder and skeletal muscle.

The protein resides in the membrane. It localises to the cell membrane. It is found in the sarcolemma. In terms of biological role, important for the maintenance of cardiac function. Plays a regulatory function in heart rate dynamics mediated, at least in part, through cAMP-binding and, probably, by increasing cell surface expression of the potassium channel KCNK2 and enhancing current density. The sequence is that of Popeye domain-containing protein 2 (Popdc2) from Mus musculus (Mouse).